A 211-amino-acid chain; its full sequence is ATP phosphoribosyltransferase (211 aa).

It belongs to the ATP phosphoribosyltransferase family. Short subfamily. Heteromultimer composed of HisG and HisZ subunits.

It is found in the cytoplasm. It carries out the reaction 1-(5-phospho-beta-D-ribosyl)-ATP + diphosphate = 5-phospho-alpha-D-ribose 1-diphosphate + ATP. Its pathway is amino-acid biosynthesis; L-histidine biosynthesis; L-histidine from 5-phospho-alpha-D-ribose 1-diphosphate: step 1/9. In terms of biological role, catalyzes the condensation of ATP and 5-phosphoribose 1-diphosphate to form N'-(5'-phosphoribosyl)-ATP (PR-ATP). Has a crucial role in the pathway because the rate of histidine biosynthesis seems to be controlled primarily by regulation of HisG enzymatic activity. The sequence is that of ATP phosphoribosyltransferase from Pseudomonas putida (strain GB-1).